The sequence spans 190 residues: MILIIDNYDSFAYNLVQYVGEFDDVTVRRNDAIDVEGIHELDPDGIVVSPGPGTPAEAGVSIDVFAETEYPALGVCLGHQALCAAHGTPVGHAPSVVHGKPSEVRHDGTRLYDGVDDPFEVGRYHSLAVKASELPDTLSETAHTNDEQGIVMGVQHAEKPHIGVQFHPESILTDAGKQIVENFCTGIAKA.

One can recognise a Glutamine amidotransferase type-1 domain in the interval 1 to 190 (MILIIDNYDS…ENFCTGIAKA (190 aa)). Residue 51–53 (GPG) coordinates L-glutamine. The active-site Nucleophile; for GATase activity is the C76. Residues Q80 and 126–127 (SL) contribute to the L-glutamine site. Active-site residues include H167 and E169.

In terms of assembly, tetramer of two components I and two components II.

It catalyses the reaction chorismate + L-glutamine = anthranilate + pyruvate + L-glutamate + H(+). It functions in the pathway amino-acid biosynthesis; L-tryptophan biosynthesis; L-tryptophan from chorismate: step 1/5. In Haloarcula marismortui (strain ATCC 43049 / DSM 3752 / JCM 8966 / VKM B-1809) (Halobacterium marismortui), this protein is Anthranilate synthase component II (trpG2).